We begin with the raw amino-acid sequence, 544 residues long: Lipid II flippase MurJ (544 aa).

A run of 14 helical transmembrane segments spans residues 21–41 (ILGMVYLIPFSIMVGATGGAL), 49–69 (YTLFLNIATMGFPAAVSKFVS), 90–110 (VMLVTGMIAFFILYLSAPMFA), 127–147 (VVYVIRMVSLALLVVPIMSLV), 169–189 (IVRIIFLLSATFLILKVFNGG), 191–211 (VIAVGYATFAALIGAFGGLVV), 241–261 (MFFELFSYAAPYVFVGLAIPL), 297–317 (LVMIPVSLATAFGLTLIPTIT), 338–358 (TILFLIIPAVVGISLLSGPTY), 375–395 (ILLWYSPVAILFSLFTVNAAI), 404–424 (FAVVSLVIGVVIKLVLNVPLI), 431–451 (GAILATALGYIASLLYGFIMI), 471–491 (VLSAIMGIAVKIVQWVLGFFI), and 500–520 (AAIVVVIAAAVGGAVYLYCGY).

Belongs to the polysaccharide synthase family.

The protein localises to the cell membrane. The protein operates within cell wall biogenesis; peptidoglycan biosynthesis. Involved in peptidoglycan biosynthesis. Transports lipid-linked peptidoglycan precursors from the inner to the outer leaflet of the cytoplasmic membrane. Not essential for growth. This Bacillus subtilis (strain 168) protein is Lipid II flippase MurJ.